A 197-amino-acid chain; its full sequence is uncharacterized protein (197 aa).

A helical membrane pass occupies residues 7-27; sequence PISVGQMVLICIFILIILFVI.

This sequence belongs to the IIV-6 307L family.

It is found in the membrane. This is an uncharacterized protein from Acheta domesticus (House cricket).